The primary structure comprises 119 residues: Holo-[acyl-carrier-protein] synthase (119 aa).

D6 and E51 together coordinate Mg(2+).

The protein belongs to the P-Pant transferase superfamily. AcpS family. Requires Mg(2+) as cofactor.

The protein localises to the cytoplasm. The enzyme catalyses apo-[ACP] + CoA = holo-[ACP] + adenosine 3',5'-bisphosphate + H(+). Its function is as follows. Transfers the 4'-phosphopantetheine moiety from coenzyme A to a Ser of acyl-carrier-protein. This chain is Holo-[acyl-carrier-protein] synthase, found in Sulfurovum sp. (strain NBC37-1).